The sequence spans 360 residues: Type II methyltransferase M.BglII (360 aa).

A disordered region spans residues 316–341 (TRQRKGSKPSLDSKAHPEEHHKKEIV). Residues 326–341 (LDSKAHPEEHHKKEIV) show a composition bias toward basic and acidic residues.

It belongs to the N(4)/N(6)-methyltransferase family. N(4) subfamily.

It catalyses the reaction a 2'-deoxycytidine in DNA + S-adenosyl-L-methionine = an N(4)-methyl-2'-deoxycytidine in DNA + S-adenosyl-L-homocysteine + H(+). A beta subtype methylase, recognizes the double-stranded sequence 5'-AGATCT-3', methylates C-5 on both strands, and protects the DNA from cleavage by the BglII endonuclease. The polypeptide is Type II methyltransferase M.BglII (Bacillus subtilis).